We begin with the raw amino-acid sequence, 712 residues long: Anaerobic ribonucleoside-triphosphate reductase (712 aa).

The region spanning 3-92 is the ATP-cone domain; the sequence is PHVMKRDGCK…EYRHDRDIQR (90 aa). The Glycine radical domain occupies 583 to 708; the sequence is KKVNPYDKID…VKRRVKHLGN (126 aa). Zn(2+) is bound by residues C644, C647, C662, and C665. G681 carries the glycine radical modification.

It belongs to the anaerobic ribonucleoside-triphosphate reductase family. In terms of assembly, forms a tetramer composed of two NrdD and two NrdG subunits.

It catalyses the reaction a ribonucleoside 5'-triphosphate + formate + H(+) = a 2'-deoxyribonucleoside 5'-triphosphate + CO2 + H2O. Activated under anaerobic conditions by NrdG, a tightly associated activase. Activation involves the formation of a glycyl radical at Gly-681. Catalyzes the conversion of ribonucleotides into deoxyribonucleotides, which are required for DNA synthesis and repair. The chain is Anaerobic ribonucleoside-triphosphate reductase (nrdD) from Salmonella typhimurium (strain LT2 / SGSC1412 / ATCC 700720).